The chain runs to 961 residues: Glycine dehydrogenase (decarboxylating) (961 aa).

K709 is subject to N6-(pyridoxal phosphate)lysine.

It belongs to the GcvP family. As to quaternary structure, the glycine cleavage system is composed of four proteins: P, T, L and H. The cofactor is pyridoxal 5'-phosphate.

It catalyses the reaction N(6)-[(R)-lipoyl]-L-lysyl-[glycine-cleavage complex H protein] + glycine + H(+) = N(6)-[(R)-S(8)-aminomethyldihydrolipoyl]-L-lysyl-[glycine-cleavage complex H protein] + CO2. In terms of biological role, the glycine cleavage system catalyzes the degradation of glycine. The P protein binds the alpha-amino group of glycine through its pyridoxal phosphate cofactor; CO(2) is released and the remaining methylamine moiety is then transferred to the lipoamide cofactor of the H protein. This Streptomyces avermitilis (strain ATCC 31267 / DSM 46492 / JCM 5070 / NBRC 14893 / NCIMB 12804 / NRRL 8165 / MA-4680) protein is Glycine dehydrogenase (decarboxylating).